A 463-amino-acid chain; its full sequence is MLLLLLPLLWGRERAEGQTSKLLTMQSSVTVQEGLCVHVPCSFSYPSHGWIYPGPVVHGYWFREGANTDQDAPVATNNPARAVWEETRDRFHLLGDPHTKNCTLSIRDARRSDAGRYFFRMEKGSIKWNYKHHRLSVNVTALTHRPNILIPGTLESGCPQNLTCSVPWACEQGTPPMISWIGTSVSPLDPSTTRSSVLTLIPQPQDHGTSLTCQVTFPGASVTTNKTVHLNVSYPPQNLTMTVFQGDGTVSTVLGNGSSLSLPEGQSLRLVCAVDAVDSNPPARLSLSWRGLTLCPSQPSNPGVLELPWVHLRDAAEFTCRAQNPLGSQQVYLNVSLQSKATSGVTQGVVGGAGATALVFLSFCVIFVVVRSCRKKSARPAAGVGDTGIEDANAVRGSASQGPLTEPWAEDSPPDQPPPASARSSVGEGELQYASLSFQMVKPWDSRGQEATDTEYSEIKIHR.

The first 17 residues, 1-17 (MLLLLLPLLWGRERAEG), serve as a signal peptide directing secretion. Residues 18–348 (QTSKLLTMQS…SKATSGVTQG (331 aa)) lie on the Extracellular side of the membrane. In terms of domain architecture, Ig-like V-type spans 20–140 (SKLLTMQSSV…KHHRLSVNVT (121 aa)). Disulfide bonds link Cys36–Cys170, Cys41–Cys102, and Cys164–Cys213. Asn101 carries an N-linked (GlcNAc...) asparagine glycan. Arg120 contacts N-acetylneuraminate. 2 N-linked (GlcNAc...) asparagine glycosylation sites follow: Asn138 and Asn161. In terms of domain architecture, Ig-like C2-type 1 spans 146-229 (PNILIPGTLE…ASVTTNKTVH (84 aa)). N-linked (GlcNAc...) asparagine glycans are attached at residues Asn225, Asn231, Asn238, and Asn256. Residues 236-336 (PQNLTMTVFQ…GSQQVYLNVS (101 aa)) form the Ig-like C2-type 2 domain. A disulfide bridge connects residues Cys272 and Cys320. Residue Asn334 is glycosylated (N-linked (GlcNAc...) asparagine). Residues 349 to 369 (VVGGAGATALVFLSFCVIFVV) form a helical membrane-spanning segment. Residues 370–463 (VRSCRKKSAR…TEYSEIKIHR (94 aa)) are Cytoplasmic-facing. The interval 380–428 (PAAGVGDTGIEDANAVRGSASQGPLTEPWAEDSPPDQPPPASARSSVGE) is disordered. The ITIM motif signature appears at 431-436 (LQYASL). Residues 444-463 (WDSRGQEATDTEYSEIKIHR) form a disordered region. The SLAM-like motif motif lies at 454 to 459 (TEYSEI).

Belongs to the immunoglobulin superfamily. SIGLEC (sialic acid binding Ig-like lectin) family. In terms of tissue distribution, expressed by peripheral blood leukocytes (neutrophils and monocytes but not eosinophils). Found in liver, fetal liver, bone marrow, placenta, spleen and in lower levels in skeletal muscle, fetal brain, stomach, lung, thymus, prostate, brain, mammary, adrenal gland, colon, trachea, cerebellum, testis, small intestine and spinal cordon.

The protein localises to the membrane. In terms of biological role, putative adhesion molecule that mediates sialic-acid dependent binding to cells. Preferentially binds to alpha-2,3- or alpha-2,6-linked sialic acid. The sialic acid recognition site may be masked by cis interactions with sialic acids on the same cell surface. The polypeptide is Sialic acid-binding Ig-like lectin 9 (SIGLEC9) (Homo sapiens (Human)).